The chain runs to 729 residues: MQSTSNHLWLLSDILGQGATANVFRGRHKKTGDLYAVKVFNNISFLRPVDVQMREFEVLKKLNHKNIVKLFAIEEETTTRHKVLIMEFCPCGSLYTVLEEPSNAYGLPESEFLIVLRDVVGGMNHLRENGIVHRDIKPGNIMRVIGEDGQSVYKLTDFGAARELEDDEQFVSLYGTEEYLHPDMYERAVLRKDHQKKYGATVDLWSVGVTFYHAATGSLPFRPFEGPRRNKEVMYKIITGKPSGAISGVQKAENGPIDWSGDMPLSCSLSQGLQALLTPVLANILEADQEKCWGFDQFFAETSDVLHRMVIHVFSLQHMTAHKIYIHSYNTAAVFHELVYKQTKIVSSNQELIYEGRRLVLELGRLAQHFPKTTEENPIFVTSREQLNTVGLRYEKISLPKIHPRYDLDGDASMAKAVTGVVCYACRTASTLLLYQELMRKGVRWLVELVKDDYNETVHKKTEVVITLDFCIRNIEKTVKVYEKLMKVNLEAAELGEISDIHTKLLRLSSSQGTIESSLQDISSRLSPGGLLADTWAHQEGTHPRDRNVEKLQVLLNCITEIYYQFKKDKAERRLAYNEEQIHKFDKQKLYYHATKAMSHFSEECVRKYEAFKDKSEEWMRKMLHLRKQLLSLTNQCFDIEEEVSKYQDYTNELQETLPQKMLAASGGVKHAMAPIYPSSNTLVEMTLGMKKLKEEMEGVVKELAENNHILERFGSLTMDGGLRNVDCL.

One can recognise a Protein kinase domain in the interval W9 to V310. L15–V23 provides a ligand contact to ATP. A Glycyl lysine isopeptide (Lys-Gly) (interchain with G-Cter in ubiquitin) cross-link involves residue K30. K38 contacts ATP. The Proton acceptor role is filled by D135. S172 is subject to Phosphoserine; by autocatalysis and IKKB. One can recognise a Ubiquitin-like domain in the interval M309–E385. K401 participates in a covalent cross-link: Glycyl lysine isopeptide (Lys-Gly) (interchain with G-Cter in ubiquitin). Coiled-coil stretches lie at residues D407–T657 and L658–R713. The tract at residues R621–L729 is interaction with AZI2, TANK and TBKBP1. Residue K670 forms a Glycyl lysine isopeptide (Lys-Gly) (interchain with G-Cter in ubiquitin) linkage. S716 bears the Phosphoserine mark.

This sequence belongs to the protein kinase superfamily. Ser/Thr protein kinase family. I-kappa-B kinase subfamily. Homodimer. Interacts with DDX3X, TIRAP and TRAF2. Part of a ternary complex consisting of TANK, TRAF2 and TBK1. Interacts with AZI2, TANK and TBKBP1; these interactions are mutually exclusive and mediate TBK1 activation. Interacts with GSK3B; this interaction promotes TBK1 self-association and autophosphorylation. Interacts with SIKE1; SIKE1 is associated with TBK1 under physiological condition and dissociated from TBK1 upon viral infection or TLR3 stimulation. Interacts with IRF3, leading to IRF3 phosphorylation. Interacts with RIGI. Interacts with CYLD. Interacts with OPTN and TRAF3. Interacts with SRC. Interacts with the exocyst complex subunit SEC5/EXOC2; this interaction is sufficient to trigger TBK1 activity. Interacts with STING1, leading to STING1 phosphorylation. Interacts with IFIT3 (via N-terminus). Interacts with MAVS; interaction only takes place in the presence of IFIT3 and leads to MAVS phosphorylation. Interacts (via protein kinase domain) with TTLL12 (via TTL domain); the interaction prevents MAVS binding to TBK1. Interacts with TICAM1; this interaction is enhanced in the presence of WDFY1 and leads to TICAM1 phosphorylation. Interacts with TRIM26. Interacts with TRIM23. Interacts with TTC4 and IKBKE. Interacts with HNRNPA2B1. Interacts with DDX3X. Interacts with TRIM14. Interacts with CEP170; efficient complex formation may be dependent on the presence of CCDC61. Interacts with TRAF3IP3. Interacts with HSP90AA1; the interaction mediates TBK1 association with TOMM70. Interacts with TAX1BP1. Interacts with kinase IKBKB; the complex interacts with STAT1, leading to phosphorylation of STAT1 on 'Thr-748' by IKBKB. Interacts with ICOS; this interaction is critical for the maturation of T follicular regulatory cells. Interacts with RNF144B; this interaction prevents TBK1 phosphorylation and subsequent activation. Interacts with ASB8; this interaction promotes TBK1 proteasomal degradation. Autophosphorylation at Ser-172 activates the kinase, and is an essential step for virus-triggered signaling. Phosphorylated by IKBKB/IKKB at Ser-172. Phosphorylation requires homodimerization and ubiquitination at Lys-30 and Lys-401. Dephosphorylated at Ser-172 by PPM1B and this negatively regulates its role in mediating antiviral response. In terms of processing, 'Lys-63'-linked polyubiquitination by MIB1 after RNA virus infection, or by NRDP1 after LPS stimulation at Lys-30 and Lys-401, participates in kinase activation. 'Lys-48'-linked polyubiquitination at Lys-670 by DTX4 leads to proteasomal degradation. 'Lys-48'-linked polyubiquitination by TRAIP also leads to proteasomal degradation. 'Lys-48'-linked polyubiquitination by TRAF7; leading to proteasomal degradation. 'Lys-63'-linked polyubiquitination by RNF128 at Lys-30 and Lys-401 leads to the activation of antiviral responses. 'Lys-48'-linked polyubiquitination after 'lys-33'-linked deubiquitination by USP38 promotes TBK1 degradation.

The protein localises to the cytoplasm. The catalysed reaction is L-seryl-[protein] + ATP = O-phospho-L-seryl-[protein] + ADP + H(+). The enzyme catalyses L-threonyl-[protein] + ATP = O-phospho-L-threonyl-[protein] + ADP + H(+). Kinase activity is inhibited competitively by amlexanox. Its function is as follows. Serine/threonine kinase that plays an essential role in regulating inflammatory responses to foreign agents. Following activation of toll-like receptors by viral or bacterial components, associates with TRAF3 and TANK and phosphorylates interferon regulatory factors (IRFs) IRF3 and IRF7 as well as DDX3X. This activity allows subsequent homodimerization and nuclear translocation of the IRFs leading to transcriptional activation of pro-inflammatory and antiviral genes including IFNA and IFNB. In order to establish such an antiviral state, TBK1 form several different complexes whose composition depends on the type of cell and cellular stimuli. Thus, several scaffolding molecules including FADD, TRADD, MAVS, AZI2, TANK or TBKBP1/SINTBAD can be recruited to the TBK1-containing-complexes. Plays a key role in IRF3 activation: acts by first phosphorylating innate adapter proteins MAVS, STING1 and TICAM1 on their pLxIS motif, leading to recruitment of IRF3, thereby licensing IRF3 for phosphorylation by TBK1. Under particular conditions, functions as a NF-kappa-B effector by phosphorylating NF-kappa-B inhibitor alpha/NFKBIA, IKBKB or RELA to translocate NF-Kappa-B to the nucleus. Restricts bacterial proliferation by phosphorylating the autophagy receptor OPTN/Optineurin on 'Ser-177', thus enhancing LC3 binding affinity and antibacterial autophagy. Phosphorylates SMCR8 component of the C9orf72-SMCR8 complex, promoting autophagosome maturation. Phosphorylates ATG8 proteins MAP1LC3C and GABARAPL2, thereby preventing their delipidation and premature removal from nascent autophagosomes. Seems to play a role in energy balance regulation by sustaining a state of chronic, low-grade inflammation in obesity, which leads to a negative impact on insulin sensitivity. Acts both as a positive and negative regulator of the mTORC1 complex, depending on the context: activates mTORC1 in response to growth factors by catalyzing phosphorylation of MTOR, while it limits the mTORC1 complex by promoting phosphorylation of RPTOR. Acts as a positive regulator of the mTORC2 complex by mediating phosphorylation of MTOR, leading to increased phosphorylation and activation of AKT1. Phosphorylates and activates AKT1. Involved in the regulation of TNF-induced RIPK1-mediated cell death, probably acting via CYLD phosphorylation that in turn controls RIPK1 ubiquitination status. Also participates in the differentiation of T follicular regulatory cells together with the receptor ICOS. The protein is Serine/threonine-protein kinase TBK1 of Mus musculus (Mouse).